The following is a 203-amino-acid chain: FMN-dependent NADH:quinone oxidoreductase (203 aa).

FMN is bound by residues Ser9, 15-17 (SVS), and 138-141 (SRGG).

This sequence belongs to the azoreductase type 1 family. Homodimer. FMN is required as a cofactor.

The enzyme catalyses 2 a quinone + NADH + H(+) = 2 a 1,4-benzosemiquinone + NAD(+). It catalyses the reaction N,N-dimethyl-1,4-phenylenediamine + anthranilate + 2 NAD(+) = 2-(4-dimethylaminophenyl)diazenylbenzoate + 2 NADH + 2 H(+). Its function is as follows. Quinone reductase that provides resistance to thiol-specific stress caused by electrophilic quinones. Also exhibits azoreductase activity. Catalyzes the reductive cleavage of the azo bond in aromatic azo compounds to the corresponding amines. This chain is FMN-dependent NADH:quinone oxidoreductase, found in Methylorubrum populi (strain ATCC BAA-705 / NCIMB 13946 / BJ001) (Methylobacterium populi).